The primary structure comprises 287 residues: AA14 family lytic polysaccharide monooxygenase A (287 aa).

The first 18 residues, 1–18, serve as a signal peptide directing secretion; sequence MLRILTLSILATSKLASA. N-linked (GlcNAc...) asparagine glycosylation is found at asparagine 33, asparagine 83, and asparagine 137. Cystine bridges form between cysteine 188–cysteine 193, cysteine 195–cysteine 216, and cysteine 236–cysteine 243. Asparagine 238 carries an N-linked (GlcNAc...) asparagine glycan.

Belongs to the polysaccharide monooxygenase AA14 family. Cu(2+) is required as a cofactor.

It localises to the secreted. Lytic polysaccharide monooxygenase (LPMO) that has a broad substrate specificity with strong oxidative activity on pure amorphous cellulose and xyloglucan and plays as a bifunctional enzyme to decompose some specific network structures formed between cellulose and hemicellulose in the plant cell walls. Catalysis by LPMOs requires the reduction of the active-site copper from Cu(II) to Cu(I) by a reducing agent and H(2)O(2) or O(2) as a cosubstrate. Simultaneously oxidizes cellulose, xylan and xyloglucan in natural hemi/cellulosic substrate such as fibrillated eucalyptus pulp, and releases native and oxidized cello-oligosaccharides, xylo-oligosaccharides and xyloglucan oligosaccharides from this substrate. The cellulolytic/hemicellulolytic activity becomes weaker as the contents of xylan increase in the alkaline-extracted hemi/cellulosic substrates. The chain is AA14 family lytic polysaccharide monooxygenase A from Talaromyces rugulosus (Penicillium rugulosum).